The following is a 370-amino-acid chain: tRNA-specific 2-thiouridylase MnmA (370 aa).

ATP-binding positions include 9 to 16 (GMSGGVDS) and M35. The interaction with target base in tRNA stretch occupies residues 95–97 (NPD). C100 functions as the Nucleophile in the catalytic mechanism. A disulfide bond links C100 and C196. G124 contributes to the ATP binding site. The interval 146–148 (KDQ) is interaction with tRNA. C196 acts as the Cysteine persulfide intermediate in catalysis. Residues 308–309 (RY) form an interaction with tRNA region.

The protein belongs to the MnmA/TRMU family.

The protein localises to the cytoplasm. It catalyses the reaction S-sulfanyl-L-cysteinyl-[protein] + uridine(34) in tRNA + AH2 + ATP = 2-thiouridine(34) in tRNA + L-cysteinyl-[protein] + A + AMP + diphosphate + H(+). Functionally, catalyzes the 2-thiolation of uridine at the wobble position (U34) of tRNA, leading to the formation of s(2)U34. This is tRNA-specific 2-thiouridylase MnmA from Ralstonia nicotianae (strain ATCC BAA-1114 / GMI1000) (Ralstonia solanacearum).